We begin with the raw amino-acid sequence, 353 residues long: Phospho-N-acetylmuramoyl-pentapeptide-transferase (353 aa).

Transmembrane regions (helical) follow at residues 24 to 44 (LGFF…ILWA), 66 to 86 (TPTM…VLCA), 88 to 108 (LGNL…FVGF), 129 to 149 (FGML…KGLD), 160 to 180 (PLFE…FLST), 192 to 212 (GLAS…VYVA), 229 to 249 (VGEL…FLWY), 256 to 276 (VFMG…NAIV), 281 to 301 (ILLV…ILQV), and 330 to 350 (KVIV…LLSL).

The protein belongs to the glycosyltransferase 4 family. MraY subfamily. It depends on Mg(2+) as a cofactor.

The protein resides in the cell inner membrane. It catalyses the reaction UDP-N-acetyl-alpha-D-muramoyl-L-alanyl-gamma-D-glutamyl-meso-2,6-diaminopimeloyl-D-alanyl-D-alanine + di-trans,octa-cis-undecaprenyl phosphate = di-trans,octa-cis-undecaprenyl diphospho-N-acetyl-alpha-D-muramoyl-L-alanyl-D-glutamyl-meso-2,6-diaminopimeloyl-D-alanyl-D-alanine + UMP. It participates in cell wall biogenesis; peptidoglycan biosynthesis. In terms of biological role, catalyzes the initial step of the lipid cycle reactions in the biosynthesis of the cell wall peptidoglycan: transfers peptidoglycan precursor phospho-MurNAc-pentapeptide from UDP-MurNAc-pentapeptide onto the lipid carrier undecaprenyl phosphate, yielding undecaprenyl-pyrophosphoryl-MurNAc-pentapeptide, known as lipid I. The protein is Phospho-N-acetylmuramoyl-pentapeptide-transferase of Helicobacter pylori (strain Shi470).